We begin with the raw amino-acid sequence, 311 residues long: Acetyl-coenzyme A carboxylase carboxyl transferase subunit alpha (311 aa).

A CoA carboxyltransferase C-terminal domain is found at N36–K286.

This sequence belongs to the AccA family. In terms of assembly, acetyl-CoA carboxylase is a heterohexamer composed of biotin carboxyl carrier protein (AccB), biotin carboxylase (AccC) and two subunits each of ACCase subunit alpha (AccA) and ACCase subunit beta (AccD).

The protein localises to the cytoplasm. The enzyme catalyses N(6)-carboxybiotinyl-L-lysyl-[protein] + acetyl-CoA = N(6)-biotinyl-L-lysyl-[protein] + malonyl-CoA. It functions in the pathway lipid metabolism; malonyl-CoA biosynthesis; malonyl-CoA from acetyl-CoA: step 1/1. Its function is as follows. Component of the acetyl coenzyme A carboxylase (ACC) complex. First, biotin carboxylase catalyzes the carboxylation of biotin on its carrier protein (BCCP) and then the CO(2) group is transferred by the carboxyltransferase to acetyl-CoA to form malonyl-CoA. This is Acetyl-coenzyme A carboxylase carboxyl transferase subunit alpha from Sulfurimonas denitrificans (strain ATCC 33889 / DSM 1251) (Thiomicrospira denitrificans (strain ATCC 33889 / DSM 1251)).